The following is a 552-amino-acid chain: MSIFSARLASSVARNLPKAANQVACKAAYPAASLAARKLHVASTQRSAEISNILEERILGVAPKADLEETGRVLSIGDGIARVYGLNNIQADEMVEFSSGLKGMALNLEPDNVGVVVFGNDKLIKQGDIVKRTGAIVDVPVGDELLGRVVDALGNAIDGKGAINTKDRFRVGIKAPGIIPRVSVREPMQTGIKAVDSLVPIGRGQRELIIGDRQTGKTALAIDTIINQKRFNEAQDESKKLYCIYVAIGQKRSTVAQIVKRLTDSGAMGYSVIVSATASDAAPLQYLAPYSGCAMGEYFRDKGKHALIIYDDLSKQAVAYRQMSLLLRRPPGREAYPGDVFYLHSRLLERAAKMSPAMGGGSLTALPVIETQAGDVSAYIPTNVISITDGQIFLETELFYKGIRPAINVGLSVSRVGSAAQTKAMKQVAGSMKLELAQYREVAAFAQFGSDLDAATQQLLNRGVRLTELLKQGQYVPMAIEDQVAVIYCGVRGHLDKMDPAKITKFEKEFLQHIKTSEQALLDTIAKDGAISEASDAKLKDIVAKFMSTFQG.

The N-terminal 47 residues, 1–47 (MSIFSARLASSVARNLPKAANQVACKAAYPAASLAARKLHVASTQRS), are a transit peptide targeting the mitochondrion. Residue 211–218 (GDRQTGKT) coordinates ATP.

It belongs to the ATPase alpha/beta chains family. In terms of assembly, F-type ATPases have 2 components, CF(1) - the catalytic core - and CF(0) - the membrane proton channel. CF(1) has five subunits: alpha(3), beta(3), gamma(1), delta(1), epsilon(1). CF(0) has three main subunits: a, b and c.

It is found in the mitochondrion inner membrane. Functionally, mitochondrial membrane ATP synthase (F(1)F(0) ATP synthase or Complex V) produces ATP from ADP in the presence of a proton gradient across the membrane which is generated by electron transport complexes of the respiratory chain. F-type ATPases consist of two structural domains, F(1) - containing the extramembraneous catalytic core, and F(0) - containing the membrane proton channel, linked together by a central stalk and a peripheral stalk. During catalysis, ATP synthesis in the catalytic domain of F(1) is coupled via a rotary mechanism of the central stalk subunits to proton translocation. Subunits alpha and beta form the catalytic core in F(1). Rotation of the central stalk against the surrounding alpha(3)beta(3) subunits leads to hydrolysis of ATP in three separate catalytic sites on the beta subunits. Subunit alpha does not bear the catalytic high-affinity ATP-binding sites. This Drosophila melanogaster (Fruit fly) protein is ATP synthase subunit alpha, mitochondrial (blw).